Reading from the N-terminus, the 349-residue chain is NADH-quinone oxidoreductase subunit H (349 aa).

8 helical membrane passes run 20-42, 88-108, 123-143, 167-187, 202-222, 249-269, 284-304, and 325-345; these read WTLI…LTYF, GIFI…WAVV, LLYI…SGWA, MGFS…VEIV, FLSW…ISGV, GMAF…VSAL, FLPD…FLFL, and VFVP…MSPL.

It belongs to the complex I subunit 1 family. NDH-1 is composed of 14 different subunits. Subunits NuoA, H, J, K, L, M, N constitute the membrane sector of the complex.

The protein resides in the cell inner membrane. It catalyses the reaction a quinone + NADH + 5 H(+)(in) = a quinol + NAD(+) + 4 H(+)(out). NDH-1 shuttles electrons from NADH, via FMN and iron-sulfur (Fe-S) centers, to quinones in the respiratory chain. The immediate electron acceptor for the enzyme in this species is believed to be ubiquinone. Couples the redox reaction to proton translocation (for every two electrons transferred, four hydrogen ions are translocated across the cytoplasmic membrane), and thus conserves the redox energy in a proton gradient. This subunit may bind ubiquinone. In Dechloromonas aromatica (strain RCB), this protein is NADH-quinone oxidoreductase subunit H.